The chain runs to 139 residues: Large ribosomal subunit protein uL16 (139 aa).

Belongs to the universal ribosomal protein uL16 family. In terms of assembly, part of the 50S ribosomal subunit.

In terms of biological role, binds 23S rRNA and is also seen to make contacts with the A and possibly P site tRNAs. In Rippkaea orientalis (strain PCC 8801 / RF-1) (Cyanothece sp. (strain PCC 8801)), this protein is Large ribosomal subunit protein uL16.